The chain runs to 197 residues: MSLQIDAVILAGGMARRMGGDDKGLVELNGKAMIEHTIERIKPQVKEILINANRNQTRYAEFGFTVLSDEHTGFLGPLAGTITAMGHTQADYLLVVPCDCPLLPRDLVARLLAAIEANDAELAVASDGEREQPVVMLLKPSLRESMTAFLEAGERKIDFWYAKHRFAVAAFADQPNAFVNVNTPEQKQRLAAEINQS.

GTP contacts are provided by residues 10 to 12 (LAG), Lys23, Asn51, Asp69, and Asp99. Asp99 serves as a coordination point for Mg(2+).

The protein belongs to the MobA family. In terms of assembly, monomer. Mg(2+) serves as cofactor.

The protein localises to the cytoplasm. It carries out the reaction Mo-molybdopterin + GTP + H(+) = Mo-molybdopterin guanine dinucleotide + diphosphate. Functionally, transfers a GMP moiety from GTP to Mo-molybdopterin (Mo-MPT) cofactor (Moco or molybdenum cofactor) to form Mo-molybdopterin guanine dinucleotide (Mo-MGD) cofactor. This Shewanella sp. (strain ANA-3) protein is Molybdenum cofactor guanylyltransferase.